The primary structure comprises 94 residues: Co-chaperonin GroES (94 aa).

It belongs to the GroES chaperonin family. Heptamer of 7 subunits arranged in a ring. Interacts with the chaperonin GroEL.

It localises to the cytoplasm. In terms of biological role, together with the chaperonin GroEL, plays an essential role in assisting protein folding. The GroEL-GroES system forms a nano-cage that allows encapsulation of the non-native substrate proteins and provides a physical environment optimized to promote and accelerate protein folding. GroES binds to the apical surface of the GroEL ring, thereby capping the opening of the GroEL channel. This Staphylococcus epidermidis (strain ATCC 35984 / DSM 28319 / BCRC 17069 / CCUG 31568 / BM 3577 / RP62A) protein is Co-chaperonin GroES.